Reading from the N-terminus, the 289-residue chain is Serine/threonine-protein phosphatase Pgam5, mitochondrial (289 aa).

Residues 7–23 (FACGTGAGLLTFYLTKL) traverse the membrane as a helical segment.

This sequence belongs to the phosphoglycerate mutase family. BPG-dependent PGAM subfamily. Interacts with Pk92B/ASK1.

Its subcellular location is the mitochondrion outer membrane. The catalysed reaction is O-phospho-L-seryl-[protein] + H2O = L-seryl-[protein] + phosphate. The enzyme catalyses O-phospho-L-threonyl-[protein] + H2O = L-threonyl-[protein] + phosphate. Displays phosphatase activity for serine/threonine residues, and dephosphorylates and activates Pk92B kinase. Has apparently no phosphoglycerate mutase activity. This is Serine/threonine-protein phosphatase Pgam5, mitochondrial from Drosophila persimilis (Fruit fly).